The chain runs to 438 residues: Aspartate--tRNA(Asp/Asn) ligase (438 aa).

E176 contacts L-aspartate. The interval 198-201 (QLYK) is aspartate. Residue R220 participates in L-aspartate binding. ATP-binding positions include 220 to 222 (RAE), 228 to 230 (RHL), and E361. 2 residues coordinate Mg(2+): E361 and S364. Residues S364 and R368 each contribute to the L-aspartate site. An ATP-binding site is contributed by 409–412 (GADR).

The protein belongs to the class-II aminoacyl-tRNA synthetase family. Type 2 subfamily. Homodimer. It depends on Mg(2+) as a cofactor.

Its subcellular location is the cytoplasm. It catalyses the reaction tRNA(Asx) + L-aspartate + ATP = L-aspartyl-tRNA(Asx) + AMP + diphosphate. Its function is as follows. Aspartyl-tRNA synthetase with relaxed tRNA specificity since it is able to aspartylate not only its cognate tRNA(Asp) but also tRNA(Asn). Reaction proceeds in two steps: L-aspartate is first activated by ATP to form Asp-AMP and then transferred to the acceptor end of tRNA(Asp/Asn). The chain is Aspartate--tRNA(Asp/Asn) ligase from Methanococcus maripaludis (strain DSM 14266 / JCM 13030 / NBRC 101832 / S2 / LL).